A 222-amino-acid polypeptide reads, in one-letter code: Pectate lyase A (222 aa).

The N-terminal stretch at 1–25 (MKKMLTLLLSAGLVASIFGVMPAAA) is a signal peptide.

It belongs to the polysaccharide lyase 3 family. Ca(2+) serves as cofactor.

It is found in the secreted. The enzyme catalyses Eliminative cleavage of (1-&gt;4)-alpha-D-galacturonan to give oligosaccharides with 4-deoxy-alpha-D-galact-4-enuronosyl groups at their non-reducing ends.. It catalyses the reaction Eliminative cleavage of (1-&gt;4)-alpha-D-galacturonan methyl ester to give oligosaccharides with 4-deoxy-6-O-methyl-alpha-D-galact-4-enuronosyl groups at their non-reducing ends.. It participates in glycan metabolism; pectin degradation; 2-dehydro-3-deoxy-D-gluconate from pectin: step 2/5. Its activity is regulated as follows. Strongly inhibited by Ba(2+). To a lesser extent, is also inhibited by Sn(2+), Mg(2+) and Ag(+). Inhibited by EDTA in vitro. Its function is as follows. Catalyzes the depolymerization of both polygalacturonate and pectins of methyl esterification degree from 22 to 89%, with an endo mode of action. In contrast to the majority of pectate lyases, displays high activity on highly methylated pectins. Is not able to cleave trigalacturonate. Does not degrade xylans and carboxymethylcellulose (CMC). The protein is Pectate lyase A (pelA) of Paenibacillus barcinonensis.